Here is a 78-residue protein sequence, read N- to C-terminus: Acyl carrier protein (78 aa).

A Carrier domain is found at 1–76; it reads MALFEDIQAV…DVVKYIEDNK (76 aa). An O-(pantetheine 4'-phosphoryl)serine modification is found at S36.

It belongs to the acyl carrier protein (ACP) family. In terms of processing, 4'-phosphopantetheine is transferred from CoA to a specific serine of apo-ACP by AcpS. This modification is essential for activity because fatty acids are bound in thioester linkage to the sulfhydryl of the prosthetic group.

It localises to the cytoplasm. Its pathway is lipid metabolism; fatty acid biosynthesis. Functionally, carrier of the growing fatty acid chain in fatty acid biosynthesis. This chain is Acyl carrier protein, found in Helicobacter pylori (strain J99 / ATCC 700824) (Campylobacter pylori J99).